Reading from the N-terminus, the 313-residue chain is HPr kinase/phosphorylase (313 aa).

Residues His-140 and Lys-161 contribute to the active site. 155–162 provides a ligand contact to ATP; it reads GDSGVGKS. Ser-162 contributes to the Mg(2+) binding site. The active-site Proton acceptor; for phosphorylation activity. Proton donor; for dephosphorylation activity is Asp-179. Residues 203-212 are important for the catalytic mechanism of both phosphorylation and dephosphorylation; the sequence is LEIRGIGIID. Glu-204 is a Mg(2+) binding site. Residue Arg-245 is part of the active site. Residues 266-271 are important for the catalytic mechanism of dephosphorylation; that stretch reads PVKVGR.

The protein belongs to the HPrK/P family. In terms of assembly, homohexamer. It depends on Mg(2+) as a cofactor.

The catalysed reaction is [HPr protein]-L-serine + ATP = [HPr protein]-O-phospho-L-serine + ADP + H(+). The enzyme catalyses [HPr protein]-O-phospho-L-serine + phosphate + H(+) = [HPr protein]-L-serine + diphosphate. Functionally, catalyzes the ATP- as well as the pyrophosphate-dependent phosphorylation of a specific serine residue in HPr, a phosphocarrier protein of the phosphoenolpyruvate-dependent sugar phosphotransferase system (PTS). HprK/P also catalyzes the pyrophosphate-producing, inorganic phosphate-dependent dephosphorylation (phosphorolysis) of seryl-phosphorylated HPr (P-Ser-HPr). The two antagonistic activities of HprK/P are regulated by several intracellular metabolites, which change their concentration in response to the absence or presence of rapidly metabolisable carbon sources (glucose, fructose, etc.) in the growth medium. Therefore, by controlling the phosphorylation state of HPr, HPrK/P is a sensor enzyme that plays a major role in the regulation of carbon metabolism and sugar transport: it mediates carbon catabolite repression (CCR), and regulates PTS-catalyzed carbohydrate uptake and inducer exclusion. The protein is HPr kinase/phosphorylase of Latilactobacillus sakei subsp. sakei (strain 23K) (Lactobacillus sakei subsp. sakei).